The primary structure comprises 522 residues: Serine/threonine-protein kinase pak-2 (522 aa).

One can recognise a CRIB domain in the interval 16 to 29; it reads ISTPSNFEHRIHAG. Positions 183 to 204 are enriched in polar residues; it reads TTTPQLQPKSPSTPQAMRQQPK. The segment at 183–208 is disordered; sequence TTTPQLQPKSPSTPQAMRQQPKCTEG. The 252-residue stretch at 231–482 folds into the Protein kinase domain; it reads LTDYKQIGEG…AKDLLRHPFF (252 aa). ATP contacts are provided by residues 237–245 and Lys260; that span reads IGEGSTGVV. Asp350 serves as the catalytic Proton acceptor.

The protein belongs to the protein kinase superfamily. STE Ser/Thr protein kinase family. STE20 subfamily. It depends on Mg(2+) as a cofactor. The cofactor is Mn(2+). In terms of tissue distribution, expressed in pharynx, vulva and spermatheca. Unlike other p21-activated kinases, expression is not detected in neurons.

It catalyses the reaction L-seryl-[protein] + ATP = O-phospho-L-seryl-[protein] + ADP + H(+). The catalysed reaction is L-threonyl-[protein] + ATP = O-phospho-L-threonyl-[protein] + ADP + H(+). Serine/threonine-protein kinase which plays a redundant role with pak-1 in embryogenesis but, in contrast to pak-1, is not involved in commissural axon guidance of ventral cord motoneurons or in distal tip cell (DTC) migration. This is Serine/threonine-protein kinase pak-2 from Caenorhabditis elegans.